The sequence spans 416 residues: UDP-N-acetylglucosamine 1-carboxyvinyltransferase (416 aa).

22-23 (KN) serves as a coordination point for phosphoenolpyruvate. Arg91 contributes to the UDP-N-acetyl-alpha-D-glucosamine binding site. The active-site Proton donor is the Cys115. Cys115 bears the 2-(S-cysteinyl)pyruvic acid O-phosphothioketal mark. UDP-N-acetyl-alpha-D-glucosamine-binding positions include 120–124 (RPIDL), Asp303, and Ile325.

It belongs to the EPSP synthase family. MurA subfamily.

The protein localises to the cytoplasm. It carries out the reaction phosphoenolpyruvate + UDP-N-acetyl-alpha-D-glucosamine = UDP-N-acetyl-3-O-(1-carboxyvinyl)-alpha-D-glucosamine + phosphate. Its pathway is cell wall biogenesis; peptidoglycan biosynthesis. Its function is as follows. Cell wall formation. Adds enolpyruvyl to UDP-N-acetylglucosamine. This is UDP-N-acetylglucosamine 1-carboxyvinyltransferase from Lawsonia intracellularis (strain PHE/MN1-00).